A 176-amino-acid chain; its full sequence is Putative phosphohydrolase YueE (176 aa).

The 117-residue stretch at 23-139 (GVAHAIACAY…VKKADELDEE (117 aa)) folds into the HD domain.

The sequence is that of Putative phosphohydrolase YueE (yueE) from Bacillus subtilis (strain 168).